A 131-amino-acid chain; its full sequence is Fatty acid-binding protein (131 aa).

Residues R106 and 126–128 contribute to the (5Z,8Z,11Z,14Z)-eicosatetraenoate site; that span reads RFY. (9Z)-octadecenoate-binding positions include R106 and 126-128; that span reads RFY.

It belongs to the calycin superfamily. Fatty-acid binding protein (FABP) family.

Its subcellular location is the cytoplasm. Functionally, FABPs are thought to play a role in the intracellular transport of long-chain fatty acids and their acyl-CoA esters. The polypeptide is Fatty acid-binding protein (Tyrophagus putrescentiae (Mold mite)).